We begin with the raw amino-acid sequence, 1367 residues long: Mediator of RNA polymerase II transcription subunit 23 (1367 aa).

Residues 1343-1367 form a disordered region; the sequence is PPQALNSGSPAPQSNQVPASLPVTQ. The segment covering 1346–1367 has biased composition (polar residues); that stretch reads ALNSGSPAPQSNQVPASLPVTQ.

It belongs to the Mediator complex subunit 23 family. As to quaternary structure, component of the Mediator complex, which is composed of MED1, MED4, MED6, MED7, MED8, MED9, MED10, MED11, MED12, MED13, MED13L, MED14, MED15, MED16, MED17, MED18, MED19, MED20, MED21, MED22, MED23, MED24, MED25, MED26, MED27, MED29, MED30, MED31, CCNC, CDK8 and CDC2L6/CDK11. The MED12, MED13, CCNC and CDK8 subunits form a distinct module termed the CDK8 module. Mediator containing the CDK8 module is less active than Mediator lacking this module in supporting transcriptional activation. Individual preparations of the Mediator complex lacking one or more distinct subunits have been variously termed ARC, CRSP, DRIP, PC2, SMCC and TRAP. Interacts with CEBPB (when not methylated), CTNNB1, and GLI3. Interacts with CDK8 and ELK1.

It localises to the nucleus. In terms of biological role, component of the Mediator complex, a coactivator involved in the regulated transcription of nearly all RNA polymerase II-dependent genes. Mediator functions as a bridge to convey information from gene-specific regulatory proteins to the basal RNA polymerase II transcription machinery. Mediator is recruited to promoters by direct interactions with regulatory proteins and serves as a scaffold for the assembly of a functional pre-initiation complex with RNA polymerase II and the general transcription factors. Also required for transcriptional activation subsequent to the assembly of the pre-initiation complex. Required for transcriptional activation by adenovirus E1A protein. Required for ELK1-dependent transcriptional activation in response to activated Ras signaling. This chain is Mediator of RNA polymerase II transcription subunit 23 (Med23), found in Mus musculus (Mouse).